The primary structure comprises 92 residues: Small ribosomal subunit protein uS19 (92 aa).

It belongs to the universal ribosomal protein uS19 family.

Its function is as follows. Protein S19 forms a complex with S13 that binds strongly to the 16S ribosomal RNA. The sequence is that of Small ribosomal subunit protein uS19 from Pelobacter propionicus (strain DSM 2379 / NBRC 103807 / OttBd1).